The sequence spans 245 residues: Eukaryotic translation initiation factor 6 (245 aa).

Belongs to the eIF-6 family. Monomer. Associates with the 60S ribosomal subunit.

It localises to the cytoplasm. The protein localises to the nucleus. The protein resides in the nucleolus. In terms of biological role, binds to the 60S ribosomal subunit and prevents its association with the 40S ribosomal subunit to form the 80S initiation complex in the cytoplasm. May also be involved in ribosome biogenesis. The protein is Eukaryotic translation initiation factor 6 (eif6) of Danio rerio (Zebrafish).